A 3459-amino-acid polypeptide reads, in one-letter code: uncharacterized protein (3459 aa).

The segment covering 158-167 (NDDDWIFNED) has biased composition (acidic residues). Disordered stretches follow at residues 158-230 (NDDD…NNNN) and 400-447 (YGYI…NDEK). Residues 168 to 184 (DEKKNKNNDGNDNRYDY) are compositionally biased toward basic and acidic residues. Low complexity predominate over residues 185-201 (NDLQNNNNNDNNKYDYN). Positions 204–221 (DDEKKNKNNDGDDNKYDY) are enriched in basic and acidic residues. Acidic residues predominate over residues 406–443 (DNDDGDDYNDDNDNDDNYNDDNYNDDNYNDDNYNDDNY). A coiled-coil region spans residues 771 to 851 (VNEKKKGENE…NEMNKDEENE (81 aa)). The helical transmembrane segment at 1059–1079 (LIYMIYLFFTYKKYDLLLMFI) threads the bilayer. Disordered regions lie at residues 1148–1187 (RRQE…NDYD), 1399–1467 (IPTQ…NDDD), and 1711–1733 (QKKK…NKEN). Basic and acidic residues predominate over residues 1404-1463 (DKNETDEGNKNETDEGDKNETDEGDKNETDEGNKNETEEIYKNETDEGNKNETEEIYKND). Helical transmembrane passes span 2059-2079 (FLLF…IFFF) and 2197-2217 (IIQC…DFLF). Disordered regions lie at residues 2582–2644 (IYKD…DNNN) and 2776–2835 (GRIW…DKGD). A compositionally biased stretch (acidic residues) spans 2592-2629 (DNNDDDNINDDDNINDDDNINDDDNNNDDDNNNDDNND). The segment covering 2779–2821 (WKREENGEKKKNEKNESEKNERNEKNEKNEKHEKHEKHEKNEK) has biased composition (basic and acidic residues). Residues 2785-2820 (GEKKKNEKNESEKNERNEKNEKNEKHEKHEKHEKNE) adopt a coiled-coil conformation. 2 consecutive transmembrane segments (helical) span residues 3229 to 3249 (LFII…SFIL) and 3296 to 3316 (LLFF…NINS).

The protein resides in the membrane. This is an uncharacterized protein from Plasmodium falciparum (isolate 3D7).